The primary structure comprises 481 residues: Guanine nucleotide exchange factor C9orf72 homolog (481 aa).

The 172-residue stretch at 23 to 194 folds into the uDENN C9ORF72-type domain; that stretch reads SPLLAATFAY…ELLASMKSHS (172 aa). A cDENN C9ORF72-type domain is found at 200–343; that stretch reads DIADTVLNDD…SELTAFWRAT (144 aa). A dDENN C9ORF72-type domain is found at 370 to 464; it reads VLHRDTLVKA…IKPGLHSFIF (95 aa). A required for the homodimerization of the C9orf72-SMCR8 complex region spans residues 461 to 481; the sequence is SFIFGRPFYTSVQERDVLMTF.

As to quaternary structure, component of the C9orf72-SMCR8 complex, at least composed of C9orf72, SMCR8 and WDR41. The complex is formed of two protomers, each individually consisting of one molecule each of C9orf72, SMCR8 and WDR41. The protomers homodimerize via an interaction between C9orf72 (via C-terminus) and SMCR8 (via N-terminus). Within each protomer SMCR8 (via DENN domain) acts as a bridging protein between WDR41 (via C-terminus and N-terminus) and C9orf72 (via C-terminus). The C9orf72-SMCR8 complex associates with the ULK1/ATG1 kinase complex. Interacts with ULK1/ATG1 kinase complex members ULK1, ATG13 and RB1CC1. Interacts with SMCR8; the interaction is direct. Interacts with HNRNPA1, HNRNPA2B1 and UBQLN2. Interacts with small Rab GTPase RAB1A; the interaction mediates recruitment of RAB1A to the ULK1/ATG1 kinase complex. Also interacts with small Rab GTPase RAB7A. Interacts with cofilin. Interacts with GTP-binding proteins ARF1 and ARF6. Interacts with the DLG4/PSD-95. Interacts with CARM1 (via PH domain-like fold). Interacts with RAB39A and RAB39B (in GDP-bound forms); functions as GEF for RAB39A and RAB39B. As to expression, expressed in postnatal cerebellum and cortex (at protein level). Neuronal expression is detected in several regions of the adult brain and spinal cord. Prominent expression also observed in embryonic and early postnatal neurons including retinal ganglion cells, sensory neurons in the olfactory epithelium and in dorsal root ganglia, and spinal motor neurons. Expressed in the developing cerebral cortex, cerebellum, olfactory bulb, hippocampus and spinal cord in the embryo and in P0 cortical neurons and astrocytes. Also expressed in non-neuronal tissues such as kidney and tooth. In the spleen, highly expressed in myeloid cells compared to B cell and T cell populations where expression is much lower. In the brain, highly expressed in microglia. Expressed in the forebrain, including in the glomerular layer of the olfactory bulb (at protein level).

It localises to the nucleus. It is found in the cytoplasm. The protein resides in the P-body. Its subcellular location is the stress granule. The protein localises to the endosome. It localises to the lysosome. It is found in the cytoplasmic vesicle. The protein resides in the autophagosome. Its subcellular location is the autolysosome. The protein localises to the secreted. It localises to the cell projection. It is found in the axon. The protein resides in the growth cone. Its subcellular location is the perikaryon. The protein localises to the dendrite. It localises to the presynapse. It is found in the postsynapse. Acts as a guanine-nucleotide releasing factor (GEF) for Rab GTPases by promoting the conversion of inactive RAB-GDP to the active form RAB-GTP. Acts as a GEF for RAB39A which enables HOPS-mediated autophagosome-lysosome membrane tethering and fusion in mammalian autophagy. Component of the C9orf72-SMCR8 complex where both subunits display GEF activity and that regulates autophagy. As part of the C9orf72-SMCR8-WDR41 (CSW) complex, functions as GEF for RAB8A, and RAB39B, thereby promoting autophagosome maturation. As part of the C9orf72-SMCR8 complex, also functions as GTPase activating protein (GAP) for RAB8A and RAB11A in vitro. The C9orf72-SMCR8 complex also acts as a regulator of autophagy initiation by interacting with the ULK1/ATG1 kinase complex and modulating its protein kinase activity. Promotes initiation of autophagy by regulating the RAB1A-dependent trafficking of the ULK1/ATG1 kinase complex to the phagophore which leads to autophagosome formation. Acts as a regulator of mTORC1 signaling by promoting phosphorylation of mTORC1 substrates. Plays a role in endosomal trafficking. May be involved in regulating the maturation of phagosomes to lysosomes. Promotes the lysosomal localization and lysosome-mediated degradation of CARM1 which leads to inhibition of starvation-induced lipid metabolism. Regulates actin dynamics in motor neurons by inhibiting the GTP-binding activity of ARF6, leading to ARF6 inactivation. This reduces the activity of the LIMK1 and LIMK2 kinases which are responsible for phosphorylation and inactivation of CFL1/cofilin, leading to cofilin activation. Positively regulates axon extension and axon growth cone size in spinal motor neurons. Required for SMCR8 protein expression and localization at pre- and post-synaptic compartments in the forebrain, also regulates protein abundance of RAB3A and GRIA1/GLUR1 in post-synaptic compartments in the forebrain and hippocampus. Plays a role within the hematopoietic system in restricting inflammation and the development of autoimmunity. In Mus musculus (Mouse), this protein is Guanine nucleotide exchange factor C9orf72 homolog.